The primary structure comprises 92 residues: Acylphosphatase (92 aa).

Residues 3–92 form the Acylphosphatase-like domain; sequence TKHVLVSGIV…GPRSTHFEVT (90 aa). Active-site residues include R18 and N36.

It belongs to the acylphosphatase family.

It carries out the reaction an acyl phosphate + H2O = a carboxylate + phosphate + H(+). This chain is Acylphosphatase (acyP), found in Alcanivorax borkumensis (strain ATCC 700651 / DSM 11573 / NCIMB 13689 / SK2).